The primary structure comprises 1099 residues: Transmembrane protein 132D (1099 aa).

The N-terminal stretch at 1–30 (MCPSEMGTLWHHWSPVLISLAALFSKVTEG) is a signal peptide. Residues 31–915 (RGILESIQRF…LMQASKGLSD (885 aa)) lie on the Extracellular side of the membrane. N505 carries N-linked (GlcNAc...) asparagine glycosylation. The tract at residues 797–858 (FGQNDANPNT…LMEGRGTTTD (62 aa)) is disordered. Low complexity predominate over residues 835-848 (GSQEGQYYGSSSMG). Residues 916-936 (LEIGMYALLGVFCLAILVFLI) form a helical membrane-spanning segment. Residues 937–1099 (NCVTFALKYR…NYMERLHENV (163 aa)) lie on the Cytoplasmic side of the membrane.

This sequence belongs to the TMEM132 family. Interacts (via C-terminus) with NCKAP. In terms of tissue distribution, expressed in mature oligodendrocytes. Detected in the brain, lung, pancreas and testis. Highly expressed in mature neurons of the adult nervous system.

The protein resides in the membrane. In terms of biological role, regulate neuronals morphology via inhibition of the WAVE regulatory complex (WCR), a complex that controls F-actin cytoskeletal dynamics. This Homo sapiens (Human) protein is Transmembrane protein 132D.